Consider the following 402-residue polypeptide: Glutamate N-acetyltransferase (402 aa).

Residues T146, K172, T185, E267, N397, and T402 each contribute to the substrate site. T185 (nucleophile) is an active-site residue.

Belongs to the ArgJ family. Heterotetramer of two alpha and two beta chains.

The protein resides in the cytoplasm. It carries out the reaction N(2)-acetyl-L-ornithine + L-glutamate = N-acetyl-L-glutamate + L-ornithine. Its pathway is amino-acid biosynthesis; L-arginine biosynthesis; L-ornithine and N-acetyl-L-glutamate from L-glutamate and N(2)-acetyl-L-ornithine (cyclic): step 1/1. Its activity is regulated as follows. Competitively inhibited by L-ornithine. Its function is as follows. Catalyzes the transfer of the acetyl group from N(2)-acetylornithine to glutamate, forming N-acetylglutamate and L-ornithine. The polypeptide is Glutamate N-acetyltransferase (Methanocaldococcus jannaschii (strain ATCC 43067 / DSM 2661 / JAL-1 / JCM 10045 / NBRC 100440) (Methanococcus jannaschii)).